A 367-amino-acid polypeptide reads, in one-letter code: Inositol-3-phosphate synthase (367 aa).

At Ser2 the chain carries N-acetylserine. Lys73 is covalently cross-linked (Isoglutamyl lysine isopeptide (Lys-Gln) (interchain with Q-Cter in protein Pup)). The NAD(+) site is built by Asp78, Ala137, Tyr157, Ser200, Asp235, and Lys248.

The protein belongs to the myo-inositol 1-phosphate synthase family. Requires NAD(+) as cofactor. Pupylated at Lys-73 by the prokaryotic ubiquitin-like protein Pup, which leads to its degradation by the proteasome.

It carries out the reaction D-glucose 6-phosphate = 1D-myo-inositol 3-phosphate. Functionally, key enzyme in myo-inositol biosynthesis pathway that catalyzes the conversion of glucose 6-phosphate to 1D-myo-inositol 3-phosphate in a NAD-dependent manner. The sequence is that of Inositol-3-phosphate synthase (ino1) from Mycobacterium tuberculosis (strain ATCC 25618 / H37Rv).